We begin with the raw amino-acid sequence, 218 residues long: Protein-methionine-sulfoxide reductase heme-binding subunit MsrQ (218 aa).

5 helical membrane passes run 12-32 (TLIK…LALF), 82-102 (MLGL…LWFD), 118-138 (PFIT…ITST), 150-170 (WQWL…HYWW), and 180-200 (QPII…FWAW).

It belongs to the MsrQ family. As to quaternary structure, heterodimer of a catalytic subunit (MsrP) and a heme-binding subunit (MsrQ). It depends on FMN as a cofactor. Heme b serves as cofactor.

The protein localises to the cell inner membrane. Part of the MsrPQ system that repairs oxidized periplasmic proteins containing methionine sulfoxide residues (Met-O), using respiratory chain electrons. Thus protects these proteins from oxidative-stress damage caused by reactive species of oxygen and chlorine generated by the host defense mechanisms. MsrPQ is essential for the maintenance of envelope integrity under bleach stress, rescuing a wide series of structurally unrelated periplasmic proteins from methionine oxidation. MsrQ provides electrons for reduction to the reductase catalytic subunit MsrP, using the quinone pool of the respiratory chain. The protein is Protein-methionine-sulfoxide reductase heme-binding subunit MsrQ of Herminiimonas arsenicoxydans.